An 89-amino-acid chain; its full sequence is Phosphocarrier protein HPr (89 aa).

One can recognise an HPr domain in the interval 1 to 88 (MLEHELTVTN…ELFENRFNED (88 aa)). Catalysis depends on His-15, which acts as the Pros-phosphohistidine intermediate. Ser-46 is modified (phosphoserine; by HPrK/P).

Belongs to the HPr family.

It localises to the cytoplasm. Phosphorylation on Ser-46 inhibits the phosphoryl transfer from enzyme I to HPr. In terms of biological role, general (non sugar-specific) component of the phosphoenolpyruvate-dependent sugar phosphotransferase system (sugar PTS). This major carbohydrate active-transport system catalyzes the phosphorylation of incoming sugar substrates concomitantly with their translocation across the cell membrane. The phosphoryl group from phosphoenolpyruvate (PEP) is transferred to the phosphoryl carrier protein HPr by enzyme I. Phospho-HPr then transfers it to the PTS EIIA domain. This Xylella fastidiosa (strain Temecula1 / ATCC 700964) protein is Phosphocarrier protein HPr (ptsH).